The sequence spans 121 residues: Small ribosomal subunit protein uS13 (121 aa).

The interval 94–121 (GLPMRGQRTRTNARTRKGPRKGAAALKK) is disordered.

The protein belongs to the universal ribosomal protein uS13 family. Part of the 30S ribosomal subunit. Forms a loose heterodimer with protein S19. Forms two bridges to the 50S subunit in the 70S ribosome.

In terms of biological role, located at the top of the head of the 30S subunit, it contacts several helices of the 16S rRNA. In the 70S ribosome it contacts the 23S rRNA (bridge B1a) and protein L5 of the 50S subunit (bridge B1b), connecting the 2 subunits; these bridges are implicated in subunit movement. Contacts the tRNAs in the A and P-sites. This Delftia acidovorans (strain DSM 14801 / SPH-1) protein is Small ribosomal subunit protein uS13.